The following is a 320-amino-acid chain: Ferrochelatase (320 aa).

His-194 and Glu-275 together coordinate Fe cation.

It belongs to the ferrochelatase family.

It is found in the cytoplasm. It catalyses the reaction heme b + 2 H(+) = protoporphyrin IX + Fe(2+). Its pathway is porphyrin-containing compound metabolism; protoheme biosynthesis; protoheme from protoporphyrin-IX: step 1/1. In terms of biological role, catalyzes the ferrous insertion into protoporphyrin IX. This Cronobacter sakazakii (strain ATCC BAA-894) (Enterobacter sakazakii) protein is Ferrochelatase.